The chain runs to 459 residues: Fibrinogen C domain-containing protein 1 (459 aa).

The segment at 1-22 is disordered; sequence MVHERWKTVGSASQLEDRPRDK. Residues 1–33 lie on the Cytoplasmic side of the membrane; that stretch reads MVHERWKTVGSASQLEDRPRDKPQRASCSYVLC. The helical; Signal-anchor for type II membrane protein transmembrane segment at 34–54 threads the bilayer; the sequence is TVLLSLAVLLAVAVTGVVLFL. Residues 55 to 459 are Extracellular-facing; sequence NHTHTPGTAP…MKIRPVREDR (405 aa). Residues 233–456 form the Fibrinogen C-terminal domain; that stretch reads CANGSRPRDC…FSEMKIRPVR (224 aa). The cysteines at positions 242 and 271 are disulfide-linked. N-linked (GlcNAc...) asparagine glycosylation is present at N338. Ca(2+) is bound by residues D391 and D393. C399 and C412 are joined by a disulfide.

In terms of assembly, homotetramer; disulfide-linked.

The protein localises to the membrane. Functionally, acetyl group-binding receptor which shows a high-affinity and calcium-dependent binding to acetylated structures such as chitin, some N-acetylated carbohydrates, and amino acids, but not to their non-acetylated counterparts. Can facilitate the endocytosis of acetylated components. The protein is Fibrinogen C domain-containing protein 1 (Fibcd1) of Mus musculus (Mouse).